Consider the following 428-residue polypeptide: Kynureninase (428 aa).

Pyridoxal 5'-phosphate is bound by residues Thr-104, Thr-105, 132–135 (FPSD), Asp-213, His-216, and Tyr-238. Position 239 is an N6-(pyridoxal phosphate)lysine (Lys-239). Trp-267 and Thr-295 together coordinate pyridoxal 5'-phosphate.

The protein belongs to the kynureninase family. Homodimer. Pyridoxal 5'-phosphate serves as cofactor.

The enzyme catalyses L-kynurenine + H2O = anthranilate + L-alanine + H(+). It catalyses the reaction 3-hydroxy-L-kynurenine + H2O = 3-hydroxyanthranilate + L-alanine + H(+). It functions in the pathway amino-acid degradation; L-kynurenine degradation; L-alanine and anthranilate from L-kynurenine: step 1/1. Its pathway is cofactor biosynthesis; NAD(+) biosynthesis; quinolinate from L-kynurenine: step 2/3. Its function is as follows. Catalyzes the cleavage of L-kynurenine (L-Kyn) and L-3-hydroxykynurenine (L-3OHKyn) into anthranilic acid (AA) and 3-hydroxyanthranilic acid (3-OHAA), respectively. In Bacillus cereus (strain ZK / E33L), this protein is Kynureninase.